The chain runs to 434 residues: Probable phosphatidylinositol 3,4,5-trisphosphate 3-phosphatase TEP1 (434 aa).

The Phosphatase tensin-type domain maps to 33–255 (KTKNDIGLRL…RYHEFFITHE (223 aa)). C193 serves as the catalytic Phosphocysteine intermediate.

The catalysed reaction is a 1,2-diacyl-sn-glycero-3-phospho-(1D-myo-inositol-3,4,5-trisphosphate) + H2O = a 1,2-diacyl-sn-glycero-3-phospho-(1D-myo-inositol-4,5-bisphosphate) + phosphate. May act as a phosphoinositide 3-phosphatase by regulating PtdIns(3,4,5)P3 levels. This is Probable phosphatidylinositol 3,4,5-trisphosphate 3-phosphatase TEP1 (TEP1) from Saccharomyces cerevisiae (strain ATCC 204508 / S288c) (Baker's yeast).